Here is a 93-residue protein sequence, read N- to C-terminus: Pyrimidine/purine nucleoside phosphorylase (93 aa).

This sequence belongs to the nucleoside phosphorylase PpnP family.

The catalysed reaction is a purine D-ribonucleoside + phosphate = a purine nucleobase + alpha-D-ribose 1-phosphate. It carries out the reaction adenosine + phosphate = alpha-D-ribose 1-phosphate + adenine. The enzyme catalyses cytidine + phosphate = cytosine + alpha-D-ribose 1-phosphate. It catalyses the reaction guanosine + phosphate = alpha-D-ribose 1-phosphate + guanine. The catalysed reaction is inosine + phosphate = alpha-D-ribose 1-phosphate + hypoxanthine. It carries out the reaction thymidine + phosphate = 2-deoxy-alpha-D-ribose 1-phosphate + thymine. The enzyme catalyses uridine + phosphate = alpha-D-ribose 1-phosphate + uracil. It catalyses the reaction xanthosine + phosphate = alpha-D-ribose 1-phosphate + xanthine. In terms of biological role, catalyzes the phosphorolysis of diverse nucleosides, yielding D-ribose 1-phosphate and the respective free bases. Can use uridine, adenosine, guanosine, cytidine, thymidine, inosine and xanthosine as substrates. Also catalyzes the reverse reactions. This chain is Pyrimidine/purine nucleoside phosphorylase, found in Aliivibrio salmonicida (strain LFI1238) (Vibrio salmonicida (strain LFI1238)).